The primary structure comprises 120 residues: NAD(P)H-quinone oxidoreductase subunit 3 (120 aa).

3 helical membrane-spanning segments follow: residues 10–30, 64–84, and 89–109; these read FLGF…TNLI, MFAL…PWAV, and LGLL…IALA.

This sequence belongs to the complex I subunit 3 family. In terms of assembly, NDH-1 can be composed of about 15 different subunits; different subcomplexes with different compositions have been identified which probably have different functions.

It is found in the cellular thylakoid membrane. The catalysed reaction is a plastoquinone + NADH + (n+1) H(+)(in) = a plastoquinol + NAD(+) + n H(+)(out). It carries out the reaction a plastoquinone + NADPH + (n+1) H(+)(in) = a plastoquinol + NADP(+) + n H(+)(out). NDH-1 shuttles electrons from an unknown electron donor, via FMN and iron-sulfur (Fe-S) centers, to quinones in the respiratory and/or the photosynthetic chain. The immediate electron acceptor for the enzyme in this species is believed to be plastoquinone. Couples the redox reaction to proton translocation, and thus conserves the redox energy in a proton gradient. Cyanobacterial NDH-1 also plays a role in inorganic carbon-concentration. The sequence is that of NAD(P)H-quinone oxidoreductase subunit 3 from Prochlorococcus marinus (strain MIT 9312).